The following is a 198-amino-acid chain: 7-methyl-GTP pyrophosphatase (198 aa).

Asp-69 functions as the Proton acceptor in the catalytic mechanism.

Belongs to the Maf family. YceF subfamily. A divalent metal cation serves as cofactor.

It is found in the cytoplasm. The catalysed reaction is N(7)-methyl-GTP + H2O = N(7)-methyl-GMP + diphosphate + H(+). Its function is as follows. Nucleoside triphosphate pyrophosphatase that hydrolyzes 7-methyl-GTP (m(7)GTP). May have a dual role in cell division arrest and in preventing the incorporation of modified nucleotides into cellular nucleic acids. The polypeptide is 7-methyl-GTP pyrophosphatase (Yersinia pseudotuberculosis serotype I (strain IP32953)).